Here is a 238-residue protein sequence, read N- to C-terminus: Succinate dehydrogenase iron-sulfur subunit (238 aa).

Positions 8–97 (YRYNPDVDDA…KIVIRPLPGL (90 aa)) constitute a 2Fe-2S ferredoxin-type domain. Residues Cys55, Cys60, and Cys75 each contribute to the [2Fe-2S] cluster site. The region spanning 139–169 (QREKLDGLYECILCACCSTSCPSFWWNPDKF) is the 4Fe-4S ferredoxin-type domain. Positions 149, 152, and 155 each coordinate [4Fe-4S] cluster. Cys159 serves as a coordination point for [3Fe-4S] cluster. Trp164 provides a ligand contact to a ubiquinone. [3Fe-4S] cluster contacts are provided by Cys206 and Cys212. Cys216 is a binding site for [4Fe-4S] cluster.

It belongs to the succinate dehydrogenase/fumarate reductase iron-sulfur protein family. As to quaternary structure, part of an enzyme complex containing four subunits: a flavoprotein, an iron-sulfur, cytochrome b-556, and a hydrophobic anchor protein. The complex forms trimers. It depends on [2Fe-2S] cluster as a cofactor. [3Fe-4S] cluster is required as a cofactor. Requires [4Fe-4S] cluster as cofactor.

It is found in the cell inner membrane. It catalyses the reaction a quinone + succinate = fumarate + a quinol. It functions in the pathway carbohydrate metabolism; tricarboxylic acid cycle; fumarate from succinate (bacterial route): step 1/1. Its function is as follows. Two distinct, membrane-bound, FAD-containing enzymes are responsible for the catalysis of fumarate and succinate interconversion; the fumarate reductase is used in anaerobic growth, and the succinate dehydrogenase is used in aerobic growth. In Escherichia coli (strain K12), this protein is Succinate dehydrogenase iron-sulfur subunit (sdhB).